Consider the following 185-residue polypeptide: TATA-box-binding protein 2 (185 aa).

2 consecutive repeat copies span residues 7-84 (IENI…ANEL) and 100-178 (VQNV…KTQL).

It belongs to the TBP family.

Its function is as follows. General factor that plays a role in the activation of archaeal genes transcribed by RNA polymerase. Binds specifically to the TATA box promoter element which lies close to the position of transcription initiation. The polypeptide is TATA-box-binding protein 2 (Methanosarcina acetivorans (strain ATCC 35395 / DSM 2834 / JCM 12185 / C2A)).